Here is a 611-residue protein sequence, read N- to C-terminus: Translation initiation factor RLI1 (611 aa).

4Fe-4S ferredoxin-type domains lie at 7–31 (RVAIVNSDKCKPKKCRQECKKSCPV) and 46–75 (RIAFISEQLCIGCGICPKRCPFGAITIINL). ABC transporter domains are found at residues 77 to 318 (TNLE…FLDG) and 345 to 565 (AEKS…LKNL). ATP-binding positions include 110-117 (GTNGIGKS) and 382-389 (GENGTGKT).

This sequence belongs to the ABC transporter superfamily. ABCE family. Component of the multifactor complex (MFC). The complex associates with pre-initiation complexes.

Its subcellular location is the cytoplasm. The protein resides in the nucleus. In terms of biological role, component of the multifactor complex (MFC) involved in translation initiation. Required for the binding of MFC to the 40S ribosome. Required for the processing and nuclear export of the 60S and 40S ribosomal subunits. The sequence is that of Translation initiation factor RLI1 (RLI1) from Chaetomium thermophilum (strain DSM 1495 / CBS 144.50 / IMI 039719) (Thermochaetoides thermophila).